Reading from the N-terminus, the 435-residue chain is Mitochondrial association factor 1 form b0 (435 aa).

Residues 1 to 27 (MWRIWRCRLSFLFVTGCLLGALTAGLG) form the signal peptide. The Vacuolar portion of the chain corresponds to 28–96 (SQMSDSVGRN…VTARRRRNRR (69 aa)). The interval 43 to 89 (GVADASQEAGDVVEERTERTEEQVFAPGPPRRHSSESLFPRNPSVTA) is disordered. Positions 55–64 (VEERTERTEE) are enriched in basic and acidic residues. The helical transmembrane segment at 97-117 (ITLIATAVGVAVILAALYVLR) threads the bilayer. Residues 118–435 (RRRAQPPQEP…ESTYLASMLD (318 aa)) lie on the Cytoplasmic side of the membrane. The disordered stretch occupies residues 120–162 (RAQPPQEPEPPTRLRTPRPRAPSGQQQPSESEPPAGVPMKPGS).

Its subcellular location is the parasitophorous vacuole membrane. During host cell infection by tachyzoites, does not play a role in tethering the parasitophorous vacuole to the host mitochondria. The polypeptide is Mitochondrial association factor 1 form b0 (Toxoplasma gondii).